The chain runs to 1436 residues: Non-structural polyprotein 1AB (1436 aa).

Positions 104–142 (KLIHKANALQERLRLSQEEKATLALDVQFLQHENVRLKE) form a coiled coil. 5 helical membrane passes run 156-176 (WIIM…YAHS), 239-259 (VFYY…LAIG), 286-306 (VLPT…TLMV), 313-333 (LLAI…LCFM), and 344-364 (GLIA…LTGT). Residues His-461, Asp-489, and Ser-551 each act as charge relay system; for serine protease activity in the active site. Residues 587–620 (VKAPSQVELLKEEIERLKAQLNSATENATTVVTQ) are a coiled coil. Tyr-693 is subject to O-(5'-phospho-RNA)-tyrosine. 2 disordered regions span residues 756–828 (AKPI…YSQT) and 913–934 (SKNK…EDQG). The RdRp catalytic domain occupies 1181 to 1307 (KHFIEFDWTR…TTPSVPDDYE (127 aa)).

It belongs to the astroviridae polyprotein 1AB family. In terms of assembly, monomer. In terms of processing, cleaved by the viral and host proteases. The protease is probably autocatalytically cleaved.

It localises to the host membrane. It carries out the reaction RNA(n) + a ribonucleoside 5'-triphosphate = RNA(n+1) + diphosphate. Responsible for the cleavage of the polyprotein into functional products. Its function is as follows. Protein covalently attached to the 5' extremity of the genomic and subgenomic RNAs. It may serve as a primer for the replicase. In Homo sapiens (Human), this protein is Non-structural polyprotein 1AB (ORF1).